A 119-amino-acid chain; its full sequence is Beta-2-microglobulin (119 aa).

Residues 1–21 (MGKAAAVVLVTLVALLGLAQA) form the signal peptide. The 89-residue stretch at 25 to 113 (PKVQVYSRFP…HETLKEPQVY (89 aa)) folds into the Ig-like C1-type domain. A disulfide bridge connects residues cysteine 45 and cysteine 100.

The protein belongs to the beta-2-microglobulin family. As to quaternary structure, heterodimer of an alpha chain and a beta chain. Beta-2-microglobulin is the beta-chain of major histocompatibility complex class I molecules.

Its subcellular location is the secreted. In terms of biological role, component of the class I major histocompatibility complex (MHC). Involved in the presentation of peptide antigens to the immune system. This chain is Beta-2-microglobulin (B2M), found in Gallus gallus (Chicken).